Reading from the N-terminus, the 180-residue chain is Molybdopterin synthase catalytic subunit (180 aa).

Residues 123-124 (HR), K139, and 146-148 (KLE) each bind substrate. Positions 161–180 (RDGQKGVKVEGGKEGVEAKH) are disordered.

Belongs to the MoaE family. MOCS2B subfamily. As to quaternary structure, heterotetramer; composed of 2 small (MOCS2A) and 2 large (MOCS2B) subunits.

It is found in the cytoplasm. The enzyme catalyses 2 [molybdopterin-synthase sulfur-carrier protein]-C-terminal-Gly-aminoethanethioate + cyclic pyranopterin phosphate + H2O = molybdopterin + 2 [molybdopterin-synthase sulfur-carrier protein]-C-terminal Gly-Gly + 2 H(+). Its pathway is cofactor biosynthesis; molybdopterin biosynthesis. Catalytic subunit of the molybdopterin synthase complex, a complex that catalyzes the conversion of precursor Z into molybdopterin. Acts by mediating the incorporation of 2 sulfur atoms from thiocarboxylated MOCS2A into precursor Z to generate a dithiolene group. The sequence is that of Molybdopterin synthase catalytic subunit from Pyrenophora tritici-repentis (strain Pt-1C-BFP) (Wheat tan spot fungus).